The sequence spans 257 residues: Diphthine synthase (257 aa).

S-adenosyl-L-methionine-binding positions include L9, D86, V89, 114 to 115 (SI), L166, A207, and H232.

It belongs to the diphthine synthase family. In terms of assembly, homodimer.

It catalyses the reaction 2-[(3S)-amino-3-carboxypropyl]-L-histidyl-[translation elongation factor 2] + 3 S-adenosyl-L-methionine = diphthine-[translation elongation factor 2] + 3 S-adenosyl-L-homocysteine + 3 H(+). The protein operates within protein modification; peptidyl-diphthamide biosynthesis. Its function is as follows. S-adenosyl-L-methionine-dependent methyltransferase that catalyzes the trimethylation of the amino group of the modified target histidine residue in translation elongation factor 2 (EF-2), to form an intermediate called diphthine. The three successive methylation reactions represent the second step of diphthamide biosynthesis. This is Diphthine synthase from Methanocella arvoryzae (strain DSM 22066 / NBRC 105507 / MRE50).